The primary structure comprises 457 residues: Multidrug resistance protein MdtK (457 aa).

Transmembrane regions (helical) follow at residues 11–31 (LLAL…MGFV), 53–73 (IWLP…PVIA), 93–113 (WLAG…GYII), 127–147 (AVGY…FQVA), 160–180 (GMVM…IFIY), 189–209 (GGVG…LAMV), 243–263 (LPIA…ALLV), 276–296 (IALN…AAVT), 314–334 (AART…IFTV), 350–370 (VVTL…SDSI), 387–407 (IFYI…YILA), and 418–438 (PAGF…MMML).

The protein belongs to the multi antimicrobial extrusion (MATE) (TC 2.A.66.1) family. MdtK subfamily.

It is found in the cell inner membrane. In terms of biological role, multidrug efflux pump that functions probably as a Na(+)/drug antiporter. The protein is Multidrug resistance protein MdtK of Escherichia coli (strain SE11).